Here is a 623-residue protein sequence, read N- to C-terminus: Chaperone protein HtpG (623 aa).

The a; substrate-binding stretch occupies residues 1 to 336; that stretch reads MVSKQQTMGF…ASDLPLNISR (336 aa). Residues 337 to 550 form a b region; that stretch reads EILQDNKQVE…EQDMGLEMQR (214 aa). The c stretch occupies residues 551–623; that stretch reads ILQAAGQQVP…NRVNRLLVSS (73 aa).

Belongs to the heat shock protein 90 family. As to quaternary structure, homodimer.

It localises to the cytoplasm. In terms of biological role, molecular chaperone. Has ATPase activity. The chain is Chaperone protein HtpG from Legionella pneumophila (strain Paris).